Reading from the N-terminus, the 504-residue chain is MNQPILELKGIEKAFPGVKALDNACLNVYPGKVMALMGENGAGKSTLMKSLTGIYAMDAGEIRYQGKAVNFDGPRHSQEAGISIIHQELNLIPELTIAENIFLGREKTNAFGGIKWAEMFREADDLLKRLNVKHHSRQLLGELSLGEQQMVEIAKALSFKSQVIIMDEPTDALTDTETESLFKVINELRAEGCGIVYISHRLKEIFEICDDITVLRDGKFIGERAVADTDEDGLIEMMVGRRLDEQYPRIDVRHGETCLEVTNLTGAGVNNVSFKLDRGEILGVSGLMGAGRSELMKVIYGALKRESGDIKLNGKTINPVTPQDGLANGIAYISEDRKGDGLVLGLSVKENMSLCSLEQLSKGVQLKHYEEVTAVEDFIRLFNIKTPTRDQIIGNLSGGNQQKVAIAKGLMTRPKVLILDEPTRGVDVGAKKEIYQLINQFKAEGMSIILVSSEMPEVLGMSDRIIVMHEGRISGEFMAADANQEKLLACAVGKTTEQNNEVAA.

2 consecutive ABC transporter domains span residues 6–242 (LELK…VGRR) and 252–495 (VRHG…VGKT). Position 38 to 45 (38 to 45 (GENGAGKS)) interacts with ATP.

This sequence belongs to the ABC transporter superfamily. Ribose importer (TC 3.A.1.2.1) family. In terms of assembly, the complex is composed of an ATP-binding protein (RbsA), two transmembrane proteins (RbsC) and a solute-binding protein (RbsB).

Its subcellular location is the cell inner membrane. The catalysed reaction is D-ribose(out) + ATP + H2O = D-ribose(in) + ADP + phosphate + H(+). In terms of biological role, part of the ABC transporter complex RbsABC involved in ribose import. Responsible for energy coupling to the transport system. The sequence is that of Ribose import ATP-binding protein RbsA from Photobacterium profundum (strain SS9).